Reading from the N-terminus, the 252-residue chain is tRNA (guanine-N(1)-)-methyltransferase (252 aa).

Residues Gly-118 and 138 to 143 contribute to the S-adenosyl-L-methionine site; that span reads IGDYVL.

The protein belongs to the RNA methyltransferase TrmD family. Homodimer.

It is found in the cytoplasm. It carries out the reaction guanosine(37) in tRNA + S-adenosyl-L-methionine = N(1)-methylguanosine(37) in tRNA + S-adenosyl-L-homocysteine + H(+). Specifically methylates guanosine-37 in various tRNAs. The chain is tRNA (guanine-N(1)-)-methyltransferase from Pseudomonas paraeruginosa (strain DSM 24068 / PA7) (Pseudomonas aeruginosa (strain PA7)).